Consider the following 296-residue polypeptide: Phosphatidylglycerol--prolipoprotein diacylglyceryl transferase (296 aa).

7 helical membrane passes run 17–37 (LAVRWYGLMYLVGFIAAIVVG), 59–79 (MMFYGVLGTVLGGRLGYVLFY), 97–117 (GGMSFHGGFLGVTLAMMLFAW), 129–149 (FVAPMVPLGLAAGRLGNFING), 204–224 (SQLYEIALEGIALFFVLFLFA), 230–250 (MGAISALFLIGYGLARFTVEF), and 257–277 (FLGLLALGLSMGQWLSLPMIL). Arg142 contacts a 1,2-diacyl-sn-glycero-3-phospho-(1'-sn-glycerol).

Belongs to the Lgt family.

The protein localises to the cell inner membrane. The enzyme catalyses L-cysteinyl-[prolipoprotein] + a 1,2-diacyl-sn-glycero-3-phospho-(1'-sn-glycerol) = an S-1,2-diacyl-sn-glyceryl-L-cysteinyl-[prolipoprotein] + sn-glycerol 1-phosphate + H(+). Its pathway is protein modification; lipoprotein biosynthesis (diacylglyceryl transfer). In terms of biological role, catalyzes the transfer of the diacylglyceryl group from phosphatidylglycerol to the sulfhydryl group of the N-terminal cysteine of a prolipoprotein, the first step in the formation of mature lipoproteins. This Burkholderia cenocepacia (strain HI2424) protein is Phosphatidylglycerol--prolipoprotein diacylglyceryl transferase.